The following is a 172-amino-acid chain: Ribosome maturation factor RimM (172 aa).

Positions 92–167 constitute a PRC barrel domain; sequence ENEFYHSDLV…VILKLPEIIG (76 aa).

This sequence belongs to the RimM family. As to quaternary structure, binds ribosomal protein uS19.

The protein resides in the cytoplasm. In terms of biological role, an accessory protein needed during the final step in the assembly of 30S ribosomal subunit, possibly for assembly of the head region. Essential for efficient processing of 16S rRNA. May be needed both before and after RbfA during the maturation of 16S rRNA. It has affinity for free ribosomal 30S subunits but not for 70S ribosomes. The polypeptide is Ribosome maturation factor RimM (Ehrlichia ruminantium (strain Gardel)).